Here is a 301-residue protein sequence, read N- to C-terminus: MSGDGEWRQELDEQQLEDVRRLLLAVREADGRPEVEPAGALPGEFDGGEHLVACVEGEVVGYAHLNTTGNSFGHQVAELFVHPAHRNRGYGAKLLQALDERAAVGFRVWAHGDHPAARKLALKTGLERKRELLILHVDVEGADWPEPILRDGVSLRTFVPGQDEDAVVRVNARAFDWHPEQGALTVEDVRADERRAWFDEDGFFLAEERGEVIGFHWTKVHEPTPGRFGGERVGEVYVVGVDPAAQGGGLGRALTLAGLRYLASRGLRQIILYVEGDNAAALAVYTKLGFTRHETDVQYGR.

2 N-acetyltransferase domains span residues 6 to 151 and 153 to 301; these read EWRQ…ILRD and VSLR…QYGR. An acetyl-CoA-binding site is contributed by 79 to 81; it reads LFV. 1D-myo-inositol 2-(L-cysteinylamino)-2-deoxy-alpha-D-glucopyranoside contacts are provided by Glu180, Lys219, and Glu235. Acetyl-CoA is bound by residues 239–241 and 246–252; these read VGV and QGGGLGR. Tyr273 is a binding site for 1D-myo-inositol 2-(L-cysteinylamino)-2-deoxy-alpha-D-glucopyranoside.

It belongs to the acetyltransferase family. MshD subfamily. As to quaternary structure, monomer.

The enzyme catalyses 1D-myo-inositol 2-(L-cysteinylamino)-2-deoxy-alpha-D-glucopyranoside + acetyl-CoA = mycothiol + CoA + H(+). Catalyzes the transfer of acetyl from acetyl-CoA to desacetylmycothiol (Cys-GlcN-Ins) to form mycothiol. The chain is Mycothiol acetyltransferase from Amycolatopsis mediterranei (strain U-32).